The primary structure comprises 492 residues: MDAEIISVMPFDNSYARLDKKFYQRINPTPVKHPRIILVNRELAGEMEFPLPETDAELAELFSGNKPPQGSEPLAQVYAGHQFGNFVPQLGDGRAVLLGEFVSSSGKRYDIQLKGAGQTMYSRNGDGRSPLGPVIREYIVSEAMFRLGIPTTRALAMVCSGEEVFREQALPGAVFTRVASSHIRIGTFEYFASRNDYEGVKTLADYAIDRHYPHLKEAGNPYAAFLGKVCSVQARLIAKWMRIGFIHGVMNTDNTTISGETIDYGPCAFMDGYDPATVFSSIDHYGRYAYARQPSIAQWNLAGLAGCLLPLIHKDTGQAKSRAEEIVQGFGPEFRTHYFAEMCSKIGLKPEEPVQELLNDLLQIMHESKADFTLSFRMLGKAVLGNETPLLKLFNERDKIREWLEKWDEERERQNIKKEDAVRTMDRNNPAFIPRNHRVEQAISAAVENDDFEPTKKLIKILHHPYDDQPEYDEYMQPPEPTERVYQTFCGT.

Gly91, Gly93, Arg94, Lys114, Asp126, Gly127, Arg177, and Arg184 together coordinate ATP. The active-site Proton acceptor is the Asp253. 2 residues coordinate Mg(2+): Asn254 and Asp263. ATP is bound at residue Asp263.

Belongs to the SELO family. Mg(2+) serves as cofactor. It depends on Mn(2+) as a cofactor.

It catalyses the reaction L-seryl-[protein] + ATP = 3-O-(5'-adenylyl)-L-seryl-[protein] + diphosphate. The enzyme catalyses L-threonyl-[protein] + ATP = 3-O-(5'-adenylyl)-L-threonyl-[protein] + diphosphate. The catalysed reaction is L-tyrosyl-[protein] + ATP = O-(5'-adenylyl)-L-tyrosyl-[protein] + diphosphate. It carries out the reaction L-histidyl-[protein] + UTP = N(tele)-(5'-uridylyl)-L-histidyl-[protein] + diphosphate. It catalyses the reaction L-seryl-[protein] + UTP = O-(5'-uridylyl)-L-seryl-[protein] + diphosphate. The enzyme catalyses L-tyrosyl-[protein] + UTP = O-(5'-uridylyl)-L-tyrosyl-[protein] + diphosphate. Functionally, nucleotidyltransferase involved in the post-translational modification of proteins. It can catalyze the addition of adenosine monophosphate (AMP) or uridine monophosphate (UMP) to a protein, resulting in modifications known as AMPylation and UMPylation. This Maridesulfovibrio salexigens (strain ATCC 14822 / DSM 2638 / NCIMB 8403 / VKM B-1763) (Desulfovibrio salexigens) protein is Protein nucleotidyltransferase YdiU.